A 662-amino-acid chain; its full sequence is 72 kDa type IV collagenase (662 aa).

An N-terminal signal peptide occupies residues 1 to 29 (MEARLVWGVLVGPLRVLCVLCCLLGHAIA). The propeptide at 30–109 (APSPIIKFPG…PRCGNPDVAN (80 aa)) is activation peptide. The short motif at 100-107 (PRCGNPDV) is the Cysteine switch element. Cys-102 contacts Zn(2+). The segment at 110–221 (YNFFPRKPKW…LWTLGEGQVV (112 aa)) is collagenase-like 1. Residues Asp-134 and Asp-168 each contribute to the Ca(2+) site. Zn(2+)-binding residues include His-178 and Asp-180. Ca(2+)-binding residues include Asp-185 and Gly-186. His-193 contributes to the Zn(2+) binding site. Ca(2+)-binding residues include Gly-200, Gly-202, and Asp-204. His-206 provides a ligand contact to Zn(2+). Ca(2+) contacts are provided by Asp-208, Asp-209, and Glu-211. The collagen-binding stretch occupies residues 222–396 (RVKYGNADGE…WGFCPDQGYS (175 aa)). 3 consecutive Fibronectin type-II domains span residues 228-276 (ADGE…FCPH), 286-334 (GDGQ…FCPE), and 344-392 (SEGA…FCPD). Intrachain disulfides connect Cys-233–Cys-259, Cys-247–Cys-274, Cys-291–Cys-317, Cys-305–Cys-332, Cys-349–Cys-375, and Cys-363–Cys-390. Positions 397 to 467 (LFLVAAHEFG…GPTPTLGPVT (71 aa)) are collagenase-like 2. A Zn(2+)-binding site is contributed by His-403. Residue Glu-404 is part of the active site. 2 residues coordinate Zn(2+): His-407 and His-413. The tract at residues 414 to 662 (SQDPGALMAP…GSIKSDWLGC (249 aa)) is required for inhibitor TIMP2 binding. Cysteines 471 and 662 form a disulfide. 4 Hemopexin repeats span residues 474–518 (DIVF…WPEL), 519–565 (PEKI…GLPP), 567–615 (VQQV…WNAI), and 616–662 (PDNL…WLGC). Ca(2+)-binding residues include Asp-478, Asp-523, and Asp-571. N-linked (GlcNAc...) asparagine glycosylation is present at Asn-575. Position 620 (Asp-620) interacts with Ca(2+). A glycan (N-linked (GlcNAc...) asparagine) is linked at Asn-644.

It belongs to the peptidase M10A family. Interacts (via the C-terminal hemopexin-like domains-containing region) with the integrin alpha-V/beta-3; the interaction promotes vascular invasion in angiogenic vessels and melamoma cells. Interacts (via the C-terminal PEX domain) with TIMP2 (via the C-terminal); the interaction inhibits the degradation activity. Interacts with GSK3B. It depends on Ca(2+) as a cofactor. Requires Zn(2+) as cofactor. Phosphorylation on multiple sites modulates enzymatic activity. Phosphorylated by PKC in vitro. In terms of processing, the propeptide is processed by MMP14 (MT-MMP1) and MMP16 (MT-MMP3). Autocatalytic cleavage in the C-terminal produces the anti-angiogenic peptide, PEX. This processing appears to be facilitated by binding integrin integrinv/beta3.

It is found in the secreted. The protein localises to the extracellular space. Its subcellular location is the extracellular matrix. It localises to the membrane. The protein resides in the nucleus. The enzyme catalyses Cleavage of gelatin type I and collagen types IV, V, VII, X. Cleaves the collagen-like sequence Pro-Gln-Gly-|-Ile-Ala-Gly-Gln.. Functionally, ubiquitinous metalloproteinase that is involved in diverse functions such as remodeling of the vasculature, angiogenesis, tissue repair, tumor invasion, inflammation, and atherosclerotic plaque rupture. As well as degrading extracellular matrix proteins, can also act on several nonmatrix proteins such as big endothelial 1 and beta-type CGRP promoting vasoconstriction. Also cleaves KISS at a Gly-|-Leu bond. Appears to have a role in myocardial cell death pathways. Contributes to myocardial oxidative stress by regulating the activity of GSK3beta. Cleaves GSK3beta in vitro. Involved in the formation of the fibrovascular tissues. PEX, the C-terminal non-catalytic fragment of MMP2, possesses anti-angiogenic and anti-tumor properties and inhibits cell migration and cell adhesion to FGF2 and vitronectin. Ligand for integrin alpha-v/beta3 on the surface of blood vessels. The sequence is that of 72 kDa type IV collagenase (Mmp2) from Rattus norvegicus (Rat).